The sequence spans 134 residues: MLRTMLKSKIHRATVTQADLHYVGSVTVDADLMDAADLLEGEQVTIVDVDNGARLVTYVITGERGSGVIGINGAAAHLIHPGDLVILIAYGMLDDAAARTYEPRVVFVDADNRVLDLGADPAFVPDTAELLSPR.

Serine 25 (schiff-base intermediate with substrate; via pyruvic acid) is an active-site residue. A Pyruvic acid (Ser) modification is found at serine 25. Position 57 (threonine 57) interacts with substrate. The Proton donor role is filled by tyrosine 58. 73-75 (GAA) provides a ligand contact to substrate.

This sequence belongs to the PanD family. In terms of assembly, heterooctamer of four alpha and four beta subunits. Requires pyruvate as cofactor. Post-translationally, is synthesized initially as an inactive proenzyme, which is activated by self-cleavage at a specific serine bond to produce a beta-subunit with a hydroxyl group at its C-terminus and an alpha-subunit with a pyruvoyl group at its N-terminus.

It localises to the cytoplasm. The enzyme catalyses L-aspartate + H(+) = beta-alanine + CO2. It participates in cofactor biosynthesis; (R)-pantothenate biosynthesis; beta-alanine from L-aspartate: step 1/1. Catalyzes the pyruvoyl-dependent decarboxylation of aspartate to produce beta-alanine. The polypeptide is Aspartate 1-decarboxylase (Mycolicibacterium gilvum (strain PYR-GCK) (Mycobacterium gilvum (strain PYR-GCK))).